A 234-amino-acid chain; its full sequence is 2,3-bisphosphoglycerate-dependent phosphoglycerate mutase (234 aa).

Residues 8–15 (RHGESVWN), 21–22 (TG), R60, 87–90 (ERHY), K98, 114–115 (RR), and 183–184 (GN) contribute to the substrate site. H9 acts as the Tele-phosphohistidine intermediate in catalysis. The active-site Proton donor/acceptor is the E87.

It belongs to the phosphoglycerate mutase family. BPG-dependent PGAM subfamily. Homodimer.

It catalyses the reaction (2R)-2-phosphoglycerate = (2R)-3-phosphoglycerate. The protein operates within carbohydrate degradation; glycolysis; pyruvate from D-glyceraldehyde 3-phosphate: step 3/5. In terms of biological role, catalyzes the interconversion of 2-phosphoglycerate and 3-phosphoglycerate. The polypeptide is 2,3-bisphosphoglycerate-dependent phosphoglycerate mutase (Geobacter sp. (strain M21)).